The following is a 360-amino-acid chain: Photosystem II protein D1 (360 aa).

The next 3 membrane-spanning stretches (helical) occupy residues 29 to 46, 118 to 133, and 142 to 156; these read YIGW…SAIA, HFLI…EWEL, and WICV…AATA. His-118 provides a ligand contact to chlorophyll a. Tyr-126 contacts pheophytin a. Asp-170 and Glu-189 together coordinate [CaMn4O5] cluster. The helical transmembrane segment at 197–218 threads the bilayer; it reads FHMLGVAGVFGGSLFSAMHGSL. Chlorophyll a is bound at residue His-198. Residues His-215 and 264–265 each bind a quinone; that span reads SF. His-215 contributes to the Fe cation binding site. Residue His-272 participates in Fe cation binding. Residues 274–288 form a helical membrane-spanning segment; that stretch reads FLAAWPVIGIWFTAL. Residues His-332, Glu-333, Asp-342, and Ala-344 each contribute to the [CaMn4O5] cluster site. Residues 345–360 constitute a propeptide that is removed on maturation; the sequence is AGDVAPVALTAPPING.

The protein belongs to the reaction center PufL/M/PsbA/D family. In terms of assembly, PSII is composed of 1 copy each of membrane proteins PsbA, PsbB, PsbC, PsbD, PsbE, PsbF, PsbH, PsbI, PsbJ, PsbK, PsbL, PsbM, PsbT, PsbX, PsbY, PsbZ, Psb30/Ycf12, peripheral proteins PsbO, CyanoQ (PsbQ), PsbU, PsbV and a large number of cofactors. It forms dimeric complexes. The cofactor is The D1/D2 heterodimer binds P680, chlorophylls that are the primary electron donor of PSII, and subsequent electron acceptors. It shares a non-heme iron and each subunit binds pheophytin, quinone, additional chlorophylls, carotenoids and lipids. D1 provides most of the ligands for the Mn4-Ca-O5 cluster of the oxygen-evolving complex (OEC). There is also a Cl(-1) ion associated with D1 and D2, which is required for oxygen evolution. The PSII complex binds additional chlorophylls, carotenoids and specific lipids.. In terms of processing, tyr-161 forms a radical intermediate that is referred to as redox-active TyrZ, YZ or Y-Z. C-terminally processed by CtpA; processing is essential to allow assembly of the oxygen-evolving complex and thus photosynthetic growth.

The protein localises to the cellular thylakoid membrane. The enzyme catalyses 2 a plastoquinone + 4 hnu + 2 H2O = 2 a plastoquinol + O2. Photosystem II (PSII) is a light-driven water:plastoquinone oxidoreductase that uses light energy to abstract electrons from H(2)O, generating O(2) and a proton gradient subsequently used for ATP formation. It consists of a core antenna complex that captures photons, and an electron transfer chain that converts photonic excitation into a charge separation. The D1/D2 (PsbA/PsbD) reaction center heterodimer binds P680, the primary electron donor of PSII as well as several subsequent electron acceptors. The polypeptide is Photosystem II protein D1 (Trichormus azollae (Anabaena azollae)).